A 369-amino-acid polypeptide reads, in one-letter code: Anhydro-N-acetylmuramic acid kinase (369 aa).

12–19 (GTSLDGVD) is a binding site for ATP.

The protein belongs to the anhydro-N-acetylmuramic acid kinase family.

It catalyses the reaction 1,6-anhydro-N-acetyl-beta-muramate + ATP + H2O = N-acetyl-D-muramate 6-phosphate + ADP + H(+). It functions in the pathway amino-sugar metabolism; 1,6-anhydro-N-acetylmuramate degradation. The protein operates within cell wall biogenesis; peptidoglycan recycling. Catalyzes the specific phosphorylation of 1,6-anhydro-N-acetylmuramic acid (anhMurNAc) with the simultaneous cleavage of the 1,6-anhydro ring, generating MurNAc-6-P. Is required for the utilization of anhMurNAc either imported from the medium or derived from its own cell wall murein, and thus plays a role in cell wall recycling. This Escherichia coli (strain SE11) protein is Anhydro-N-acetylmuramic acid kinase.